A 515-amino-acid polypeptide reads, in one-letter code: Elongation factor 1-alpha S (515 aa).

The 254-residue stretch at 5 to 258 (KTHINLVVIG…DAMKPPKRPT (254 aa)) folds into the tr-type G domain. Positions 14–21 (GHVDAGKS) are G1. Residue 14-21 (GHVDAGKS) coordinates GTP. Residue Lys-55 is modified to N6,N6-dimethyllysine. A G2 region spans residues 70–74 (GITID). Lys-79 carries the post-translational modification N6,N6,N6-trimethyllysine. The segment at 91–94 (DAPG) is G3. Residues 91–95 (DAPGH) and 151–154 (NKMD) contribute to the GTP site. The segment at 151 to 154 (NKMD) is G4. Positions 187–206 (KKDKGDKKKGDKKEKKDKKD) are disordered. Basic and acidic residues predominate over residues 189–206 (DKGDKKKGDKKEKKDKKD). The segment at 222–224 (SGW) is G5. Lys-289 is modified (N6-methyllysine). An N6,N6,N6-trimethyllysine modification is found at Lys-334. Positions 396 to 419 (KRGKQTHDVSDDTEWATKDDAEPR) are disordered. Over residues 398-419 (GKQTHDVSDDTEWATKDDAEPR) the composition is skewed to basic and acidic residues. Lys-441 carries the post-translational modification N6,N6,N6-trimethyllysine.

This sequence belongs to the TRAFAC class translation factor GTPase superfamily. Classic translation factor GTPase family. EF-Tu/EF-1A subfamily.

The protein resides in the cytoplasm. Functionally, this protein promotes the GTP-dependent binding of aminoacyl-tRNA to the A-site of ribosomes during protein biosynthesis. The polypeptide is Elongation factor 1-alpha S (TEF-S) (Porphyra purpurea (Red seaweed)).